The chain runs to 520 residues: Versicolorin B desaturase (520 aa).

A helical transmembrane segment spans residues 22-42; it reads IFTTILSIFGIALSAVAAWGI. 2 N-linked (GlcNAc...) asparagine glycosylation sites follow: N266 and N426. A heme-binding site is contributed by C462.

Belongs to the cytochrome P450 family. Requires heme as cofactor.

The protein resides in the membrane. The catalysed reaction is versicolorin B + NADPH + O2 + H(+) = versicolorin A + NADP(+) + 2 H2O. Its pathway is mycotoxin biosynthesis. Versicolorin B desaturase; part of the fragmented gene cluster that mediates the biosynthesis of dothistromin (DOTH), a polyketide toxin very similar in structure to the aflatoxin precursor, versicolorin B. The first step of the pathway is the conversion of acetate to norsolorinic acid (NOR) and requires the fatty acid synthase subunits hexA and hexB, as well as the polyketide synthase pksA. PksA combines a hexanoyl starter unit and 7 malonyl-CoA extender units to synthesize the precursor NOR. The hexanoyl starter unit is provided to the acyl-carrier protein (ACP) domain by the fungal fatty acid synthase hexA/hexB. The second step is the conversion of NOR to averantin (AVN) and requires the norsolorinic acid ketoreductase nor1, which catalyzes the dehydration of norsolorinic acid to form (1'S)-averantin. The cytochrome P450 monooxygenase avnA then catalyzes the hydroxylation of AVN to 5'hydroxyaverantin (HAVN). The next step is performed by adhA that transforms HAVN to averufin (AVF). Averufin might then be converted to hydroxyversicolorone by cypX and avfA. Hydroxyversicolorone is further converted versiconal hemiacetal acetate (VHA) by moxY. VHA is then the substrate for the versiconal hemiacetal acetate esterase est1 to yield versiconal (VAL). Versicolorin B synthase vbsA then converts VAL to versicolorin B (VERB) by closing the bisfuran ring. Then, the activity of the versicolorin B desaturase verB leads to versicolorin A (VERA). DotB, a predicted chloroperoxidase, may perform epoxidation of the A-ring of VERA. Alternatively, a cytochrome P450, such as cypX or avnA could catalyze this step. It is also possible that another, uncharacterized, cytochrome P450 enzyme is responsible for this step. Opening of the epoxide could potentially be achieved by the epoxide hydrolase epoA. However, epoA seems not to be required for DOTH biosynthesis, but other epoxide hydrolases may have the ability to complement this hydrolysis. Alternatively, opening of the epoxide ring could be achieved non-enzymatically. The next step is the deoxygenation of ring A to yield the 5,8-dihydroxyanthraquinone which is most likely catalyzed by the NADPH dehydrogenase encoded by ver1. The last stages of DOTH biosynthesis are proposed to involve hydroxylation of the bisfuran. OrdB and norB might have oxidative roles here. An alternative possibility is that cytochrome P450 monoogenases such as avnA and cypX might perform these steps in addition to previously proposed steps. This Dothistroma septosporum (strain NZE10 / CBS 128990) (Red band needle blight fungus) protein is Versicolorin B desaturase.